The following is a 196-amino-acid chain: Ribosome maturation factor RimP (196 aa).

The segment covering 131 to 145 (KKKAGKKSQGKKAGK) has biased composition (basic residues). The segment at 131–153 (KKKAGKKSQGKKAGKKTPQAPVQ) is disordered.

This sequence belongs to the RimP family.

The protein localises to the cytoplasm. In terms of biological role, required for maturation of 30S ribosomal subunits. The protein is Ribosome maturation factor RimP of Corynebacterium urealyticum (strain ATCC 43042 / DSM 7109).